The sequence spans 246 residues: Probable transcriptional regulatory protein PM0980 (246 aa).

This sequence belongs to the TACO1 family.

It is found in the cytoplasm. The chain is Probable transcriptional regulatory protein PM0980 from Pasteurella multocida (strain Pm70).